Here is a 238-residue protein sequence, read N- to C-terminus: Thiamine import ATP-binding protein ThiQ (238 aa).

One can recognise an ABC transporter domain in the interval 2-230 (LALDKVRYEY…HPHPELAQFV (229 aa)). 32–39 (GPSGAGKS) serves as a coordination point for ATP.

This sequence belongs to the ABC transporter superfamily. Thiamine importer (TC 3.A.1.19.1) family. The complex is composed of two ATP-binding proteins (ThiQ), two transmembrane proteins (ThiP) and a solute-binding protein (ThiB).

It is found in the cell inner membrane. It carries out the reaction thiamine(out) + ATP + H2O = thiamine(in) + ADP + phosphate + H(+). Part of the ABC transporter complex ThiBPQ involved in thiamine import. Responsible for energy coupling to the transport system. The protein is Thiamine import ATP-binding protein ThiQ of Vibrio cholerae serotype O1 (strain ATCC 39315 / El Tor Inaba N16961).